Consider the following 752-residue polypeptide: Pentatricopeptide repeat-containing protein At5g13270, chloroplastic (752 aa).

Residues 1-80 (MTILTVQSSF…LQEMDKAGVS (80 aa)) constitute a chloroplast transit peptide. PPR repeat units follow at residues 47 to 81 (QGQVENLHLVSLSKHRKLNEAFEFLQEMDKAGVSV), 82 to 116 (SSYSYQCLFEACRELRSLSHGRLLHDRMRMGIENP), 117 to 147 (SVLLQNCVLQMYCECRSLEDADKLFDEMSEL), 148 to 182 (NAVSRTTMISAYAEQGILDKAVGLFSGMLASGDKP), 183 to 217 (PSSMYTTLLKSLVNPRALDFGRQIHAHVIRAGLCS), 218 to 248 (NTSIETGIVNMYVKCGWLVGAKRVFDQMAVK), 249 to 283 (KPVACTGLMVGYTQAGRARDALKLFVDLVTEGVEW), 284 to 318 (DSFVFSVVLKACASLEELNLGKQIHACVAKLGLES), 319 to 349 (EVSVGTPLVDFYIKCSSFESACRAFQEIREP), 350 to 384 (NDVSWSAIISGYCQMSQFEEAVKTFKSLRSKNASI), 386 to 420 (NSFTYTSIFQACSVLADCNIGGQVHADAIKRSLIG), 421 to 451 (SQYGESALITMYSKCGCLDDANEVFESMDNP), 452 to 486 (DIVAWTAFISGHAYYGNASEALRLFEKMVSCGMKP), 487 to 522 (NSVTFIAVLTACSHAGLVEQGKHCLDTMLRKYNVAP), and 523 to 553 (TIDHYDCMIDIYARSGLLDEALKFMKNMPFE). The type E motif stretch occupies residues 558 to 633 (SWKCFLSGCW…ELSCSWIQEK (76 aa)). Positions 634–664 (GKIHRFIVGDKHHPQTQEIYEKLKEFDGFME) are type E(+) motif. Residues 665–752 (GDMFQCNMTE…EGKCSCNDYW (88 aa)) form a type DYW motif region.

The protein belongs to the PPR family. PCMP-H subfamily.

It is found in the plastid. Its subcellular location is the chloroplast. This Arabidopsis thaliana (Mouse-ear cress) protein is Pentatricopeptide repeat-containing protein At5g13270, chloroplastic (PCMP-H90).